A 242-amino-acid chain; its full sequence is Galectin-3 (242 aa).

The disordered stretch occupies residues 1 to 35 (MADGFSLNDALSGSGHPPNQGWPGPWGNQPAGPGG). A2 is modified (N-acetylalanine). S6 is subject to Phosphoserine; by CK1. S12 carries the phosphoserine modification. The segment covering 17–31 (PPNQGWPGPWGNQPA) has biased composition (low complexity). 4 consecutive repeat copies span residues 35–43 (GYPGAAYPG), 44–52 (AYPGHAPGA), 53–61 (YPGQAPPGP), and 62–70 (YPGPGAHGA). The segment at 35–98 (GYPGAAYPGA…GAGAYPGASP (64 aa)) is 7 X 9 AA tandem repeats of Y-P-G-X(3)-P-[GS]-A. Residues 55-93 (GQAPPGPYPGPGAHGAYPGQPGGPGAYPSPGQPSGAGAY) form a disordered region. A 5; approximate repeat occupies 71–80 (YPGQPGGPGA). Residues 80-93 (AYPSPGQPSGAGAY) show a composition bias toward low complexity. One copy of the 6; approximate repeat lies at 81-92 (YPSPGQPSGAGA). One copy of the 7; truncated repeat lies at 93-98 (YPGASP). Residues 110-240 (YDLPLPGGVM…DIQLTSASHA (131 aa)) form the Galectin domain. 173–181 (WGREERQTT) provides a ligand contact to a beta-D-galactoside. A Nuclear export signal motif is present at residues 218 to 233 (RNLKEINKLGISGDIQ).

In terms of assembly, probably forms homo- or heterodimers. Interacts with DMBT1. Interacts with CD6 and ALCAM. Forms a complex with the ITGA3, ITGB1 and CSPG4. Interacts with LGALS3BP, LYPD3, ZFTRAF1 and UACA. Interacts with TRIM16; this interaction mediates autophagy of damage endomembranes. Interacts with cargo receptor TMED10; the interaction mediates the translocation from the cytoplasm into the ERGIC (endoplasmic reticulum-Golgi intermediate compartment) and thereby secretion. Interacts with and inhibits by binding NCR3/NKp30.

The protein localises to the cytoplasm. Its subcellular location is the nucleus. It is found in the secreted. Its function is as follows. Galactose-specific lectin which binds IgE. May mediate with the alpha-3, beta-1 integrin the stimulation by CSPG4 of endothelial cells migration. Together with DMBT1, required for terminal differentiation of columnar epithelial cells during early embryogenesis. In the nucleus: acts as a pre-mRNA splicing factor. Involved in acute inflammatory responses including neutrophil activation and adhesion, chemoattraction of monocytes macrophages, opsonization of apoptotic neutrophils, and activation of mast cells. Together with TRIM16, coordinates the recognition of membrane damage with mobilization of the core autophagy regulators ATG16L1 and BECN1 in response to damaged endomembranes. When secreted, interacts with NK cell-activating receptor NCR3/NKp30 acting as an inhibitory ligand which antagonizes NK cell attack. In Oryctolagus cuniculus (Rabbit), this protein is Galectin-3 (LGALS3).